The primary structure comprises 449 residues: Asparagine--tRNA ligase (449 aa).

Belongs to the class-II aminoacyl-tRNA synthetase family. As to quaternary structure, homodimer.

The protein localises to the cytoplasm. It carries out the reaction tRNA(Asn) + L-asparagine + ATP = L-asparaginyl-tRNA(Asn) + AMP + diphosphate + H(+). In Deinococcus geothermalis (strain DSM 11300 / CIP 105573 / AG-3a), this protein is Asparagine--tRNA ligase.